The following is a 160-amino-acid chain: CST complex subunit STN1 (160 aa).

Residues 41–133 (VEIVGTIVSR…QITANVAVAE (93 aa)) constitute a DNA-binding region (OB).

This sequence belongs to the STN1 family. As to quaternary structure, component of the CST complex, composed of CTC1, TEN1 and STN1. Interacts with CTC1. Interacts with TEN1. Interacts with POT1A. In vitro interaction with TEN1 and POT1A is mutually exclusive, indicating that POT1A and TEN1 may compete for the same binding site. In terms of tissue distribution, widely expressed.

The protein resides in the nucleus. The protein localises to the chromosome. Its subcellular location is the telomere. Its function is as follows. Component of the CST complex, a complex that binds to single-stranded DNA and is required to protect telomeres from DNA degradation. The CST complex binds single-stranded DNA with high affinity in a sequence-independent manner, while isolated subunits bind DNA with low affinity by themselves. Associates with enzymatically active telomerase. Plays a genomewide role in DNA replication and facilitates re-replication at non-telomeric loci. In Arabidopsis thaliana (Mouse-ear cress), this protein is CST complex subunit STN1.